Consider the following 778-residue polypeptide: Aerobic respiration control sensor protein ArcB (778 aa).

Topologically, residues 1-25 (MKQIRLLAQYYVDLMMKLGLVRFSM) are cytoplasmic. A helical transmembrane segment spans residues 26–46 (LLALALVVLAIVVQMAVTMVL). Topologically, residues 47–57 (HGQVESIDVIR) are periplasmic. A helical transmembrane segment spans residues 58–78 (SIFFGLLITPWAVYFLSVVVE). The Cytoplasmic portion of the chain corresponds to 79 to 778 (QLEESRQRLS…KAWVAKATKK (700 aa)). Residues 153-223 (QSSFLRSFLD…ETDEKVFRHN (71 aa)) form the PAS domain. One can recognise a PAC domain in the interval 226–278 (LTYEQWLDYPDGRKACFEIRKVPYYDRVGKRHGLMGFGRDITERKRYQDALER). A Histidine kinase domain is found at 289–507 (TISHELRTPL…TFTLTIHAPS (219 aa)). The residue at position 292 (His292) is a Phosphohistidine; by autocatalysis. A Response regulatory domain is found at 527–643 (NVLLVEDIEL…ALTAMIKKFW (117 aa)). The residue at position 576 (Asp576) is a 4-aspartylphosphate. One can recognise an HPt domain in the interval 678–771 (GPKLITDGLA…RHDVEVLKAW (94 aa)). A Phosphohistidine modification is found at His717.

Activation requires a sequential transfer of a phosphate group from a His in the primary transmitter domain, to an Asp in the receiver domain and to a His in the secondary transmitter domain.

The protein localises to the cell inner membrane. The catalysed reaction is ATP + protein L-histidine = ADP + protein N-phospho-L-histidine.. Its function is as follows. Member of the two-component regulatory system ArcB/ArcA. Sensor-regulator protein for anaerobic repression of the arc modulon. Activates ArcA via a four-step phosphorelay. ArcB can also dephosphorylate ArcA by a reverse phosphorelay involving His-717 and Asp-576. The polypeptide is Aerobic respiration control sensor protein ArcB (arcB) (Escherichia coli (strain K12)).